A 351-amino-acid polypeptide reads, in one-letter code: Protein arginine N-methyltransferase 1-B (351 aa).

The SAM-dependent MTase PRMT-type domain maps to 30–331 (KDYYFDSYAH…KNNRDLDFTV (302 aa)). S-adenosyl-L-methionine-binding residues include H43, R52, G76, E98, and E127. Residues E142 and E151 contribute to the active site.

The protein belongs to the class I-like SAM-binding methyltransferase superfamily. Protein arginine N-methyltransferase family. In terms of assembly, homodimer. Homooctamer; individual homodimers associates to form a homooctamer and homooligomerization is required for proper localization to the cell membrane. Individual homodimers can associate to form a homohexamer. Component of a complex with lsm14a/rap55a. Interacts with cirbp. From the onset of gastrulation, expressed in dorsal mesoderm, and in dorsal and ventral ectoderm. At the neurula and tail bud stages, expression is restricted to the neuroectoderm, with highest expression in the anterior neural plate.

It localises to the nucleus. Its subcellular location is the nucleoplasm. The protein resides in the cytoplasm. The protein localises to the cytosol. It catalyses the reaction L-arginyl-[protein] + 2 S-adenosyl-L-methionine = N(omega),N(omega)-dimethyl-L-arginyl-[protein] + 2 S-adenosyl-L-homocysteine + 2 H(+). It carries out the reaction L-arginyl-[protein] + S-adenosyl-L-methionine = N(omega)-methyl-L-arginyl-[protein] + S-adenosyl-L-homocysteine + H(+). The catalysed reaction is N(omega)-methyl-L-arginyl-[protein] + S-adenosyl-L-methionine = N(omega),N(omega)-dimethyl-L-arginyl-[protein] + S-adenosyl-L-homocysteine + H(+). Its function is as follows. Arginine methyltransferase that methylates (mono and asymmetric dimethylation) the guanidino nitrogens of arginyl residues present in target proteins. Constitutes the main enzyme that mediates monomethylation and asymmetric dimethylation of histone H4 'Arg-4' (H4R3me1 and H4R3me2a, respectively), a specific tag for epigenetic transcriptional activation. Methylates ilf3 to regulate its DNA-binding activity. Required for neural induction, playing a key role in the control of epidermal versus neural cell fate choice. In Xenopus laevis (African clawed frog), this protein is Protein arginine N-methyltransferase 1-B (prmt1-b).